We begin with the raw amino-acid sequence, 330 residues long: Ferrochelatase (330 aa).

Fe cation contacts are provided by histidine 200 and glutamate 281.

The protein belongs to the ferrochelatase family.

Its subcellular location is the cytoplasm. It carries out the reaction heme b + 2 H(+) = protoporphyrin IX + Fe(2+). The protein operates within porphyrin-containing compound metabolism; protoheme biosynthesis; protoheme from protoporphyrin-IX: step 1/1. In terms of biological role, catalyzes the ferrous insertion into protoporphyrin IX. The sequence is that of Ferrochelatase from Marinomonas sp. (strain MWYL1).